Consider the following 413-residue polypeptide: Zinc finger CCCH domain-containing protein 6 (413 aa).

Disordered regions lie at residues 28 to 61, 159 to 191, and 333 to 356; these read PSQV…FGGP, DSAS…TLPA, and QPGG…RDSK. Positions 176-189 are enriched in polar residues; sequence PSITDENTSTSSTL. A C3H1-type zinc finger spans residues 357–385; the sequence is PKIMKACMYFNSARGCRHGANCMYQHDAT. The segment covering 389-403 has biased composition (polar residues); the sequence is PRNLNNGNINTSDMQ. Residues 389–413 form a disordered region; sequence PRNLNNGNINTSDMQNAKRMRFDRD.

This is Zinc finger CCCH domain-containing protein 6 from Arabidopsis thaliana (Mouse-ear cress).